The following is a 346-amino-acid chain: Tyrosine--tRNA ligase (346 aa).

The 'HIGH' region signature appears at 47–56 (PSGRIHIAQA). The short motif at 230 to 234 (KMSKS) is the 'KMSKS' region element. Lys233 is a binding site for ATP.

This sequence belongs to the class-I aminoacyl-tRNA synthetase family. As to quaternary structure, homodimer.

The catalysed reaction is tRNA(Tyr) + L-tyrosine + ATP = L-tyrosyl-tRNA(Tyr) + AMP + diphosphate + H(+). Its function is as follows. Catalyzes the attachment of tyrosine to tRNA(Tyr) in a two-step reaction: tyrosine is first activated by ATP to form Tyr-AMP and then transferred to the acceptor end of tRNA(Tyr). The chain is Tyrosine--tRNA ligase (YARS) from Acanthamoeba polyphaga (Amoeba).